We begin with the raw amino-acid sequence, 128 residues long: Flagellar basal body rod protein FlgB (128 aa).

This sequence belongs to the flagella basal body rod proteins family. The basal body constitutes a major portion of the flagellar organelle and consists of a number of rings mounted on a central rod. In Gram-negative bacteria, at least four rings, L, P, S and M are present, whereas Gram-positive bacteria lack the L and P rings. The rod consists of about 26 subunits of FlgG in the distal portion, and FlgB, FlgC and FlgF build up the proximal portion of the rod with about 6 subunits each. Rod assembly occurs by export via the flagellum-specific pathway of its constituent proteins and by their incorporation into the rod structure in the probable order of FlgB, FlgC, FlgF and FlgG. Another protein, FliE, also assembles onto the stable rod structure.

The protein resides in the bacterial flagellum basal body. Structural component of flagellum, the bacterial motility apparatus. Part of the rod structure of flagellar basal body. This is Flagellar basal body rod protein FlgB from Cereibacter sphaeroides (strain ATCC 17029 / ATH 2.4.9) (Rhodobacter sphaeroides).